The sequence spans 245 residues: Uridylate kinase (245 aa).

Residue 12–15 (KLSG) coordinates ATP. Residues 20–25 (GERGVG) form an involved in allosteric activation by GTP region. Gly54 contributes to the UMP binding site. Residues Gly55 and Arg59 each contribute to the ATP site. Residues Asp74 and 135 to 142 (IGSPYFST) contribute to the UMP site. The ATP site is built by Asn163, Tyr169, and Asp172.

This sequence belongs to the UMP kinase family. As to quaternary structure, homohexamer.

It localises to the cytoplasm. It carries out the reaction UMP + ATP = UDP + ADP. Its pathway is pyrimidine metabolism; CTP biosynthesis via de novo pathway; UDP from UMP (UMPK route): step 1/1. With respect to regulation, allosterically activated by GTP. Inhibited by UTP. Its function is as follows. Catalyzes the reversible phosphorylation of UMP to UDP. This is Uridylate kinase from Streptococcus pneumoniae serotype 2 (strain D39 / NCTC 7466).